Reading from the N-terminus, the 386-residue chain is Succinate--CoA ligase [ADP-forming] subunit beta (386 aa).

In terms of domain architecture, ATP-grasp spans 9 to 244 (KDLLTAYQLP…PSQENIRDVL (236 aa)). Residues lysine 46, 53–55 (GRG), valine 102, and glutamate 107 each bind ATP. Residues asparagine 199 and aspartate 213 each contribute to the Mg(2+) site. Substrate contacts are provided by residues asparagine 264 and 321 to 323 (GIM).

The protein belongs to the succinate/malate CoA ligase beta subunit family. As to quaternary structure, heterotetramer of two alpha and two beta subunits. Mg(2+) is required as a cofactor.

The enzyme catalyses succinate + ATP + CoA = succinyl-CoA + ADP + phosphate. It catalyses the reaction GTP + succinate + CoA = succinyl-CoA + GDP + phosphate. It functions in the pathway carbohydrate metabolism; tricarboxylic acid cycle; succinate from succinyl-CoA (ligase route): step 1/1. Succinyl-CoA synthetase functions in the citric acid cycle (TCA), coupling the hydrolysis of succinyl-CoA to the synthesis of either ATP or GTP and thus represents the only step of substrate-level phosphorylation in the TCA. The beta subunit provides nucleotide specificity of the enzyme and binds the substrate succinate, while the binding sites for coenzyme A and phosphate are found in the alpha subunit. This chain is Succinate--CoA ligase [ADP-forming] subunit beta, found in Chlamydia trachomatis serovar L2 (strain ATCC VR-902B / DSM 19102 / 434/Bu).